The chain runs to 86 residues: Large ribosomal subunit protein uL23 (86 aa).

It belongs to the universal ribosomal protein uL23 family. Part of the 50S ribosomal subunit. Contacts protein L29.

Binds to 23S rRNA. One of the proteins that surrounds the polypeptide exit tunnel on the outside of the ribosome. The chain is Large ribosomal subunit protein uL23 from Thermococcus onnurineus (strain NA1).